The primary structure comprises 67 residues: Beta-mammal toxin CeII9 (67 aa).

Residues 1–66 enclose the LCN-type CS-alpha/beta domain; it reads KEGYLVNHST…VWPLPKKTCN (66 aa). Disulfide bonds link Cys12–Cys65, Cys16–Cys41, Cys25–Cys46, and Cys29–Cys48.

Belongs to the long (4 C-C) scorpion toxin superfamily. Sodium channel inhibitor family. Beta subfamily. As to expression, expressed by the venom gland.

Its subcellular location is the secreted. Beta toxins bind at site-4 of sodium channels and shift the voltage of activation toward more negative potentials thereby affecting sodium channel activation and promoting spontaneous and repetitive firing. This toxin is active against mammals and lethal to mice. Selectively modulates Nav1.4/SCN4A, a sodium channel present in both denervated and innervated skeletal muscle. This Centruroides elegans (Bark scorpion) protein is Beta-mammal toxin CeII9.